Consider the following 207-residue polypeptide: p-benzoquinone reductase (207 aa).

The Flavodoxin-like domain maps to 5-196 (IQIVFYSSYG…QIARFQGKHV (192 aa)). FMN is bound by residues 11–16 (SSYGHI), 84–86 (TRF), 119–125 (STASQHG), and histidine 140. Position 13 (tyrosine 13) interacts with NADP(+).

Belongs to the WrbA family. In terms of assembly, homodimer. It depends on FMN as a cofactor.

It carries out the reaction 1,4-benzoquinone + NADPH + H(+) = hydroquinone + NADP(+). It functions in the pathway xenobiotic degradation; 4-nitrophenol degradation. Its function is as follows. Involved in the degradation of para-nitrophenol (PNP). Catalyzes the reduction of p-benzoquinone to hydroquinone. The polypeptide is p-benzoquinone reductase (pnpB) (Pseudomonas sp. (strain WBC-3)).